The sequence spans 174 residues: Ribulose bisphosphate carboxylase small subunit, chloroplastic 1 (174 aa).

The N-terminal 45 residues, 1–45, are a transit peptide targeting the chloroplast; that stretch reads MAPAVMASSATTVAPFQGLKSTAGLPVSRRSRGSLGSVSNGGRIR.

This sequence belongs to the RuBisCO small chain family. In terms of assembly, heterohexadecamer of 8 large and 8 small subunits.

It is found in the plastid. It localises to the chloroplast. In terms of biological role, ruBisCO catalyzes two reactions: the carboxylation of D-ribulose 1,5-bisphosphate, the primary event in carbon dioxide fixation, as well as the oxidative fragmentation of the pentose substrate. Both reactions occur simultaneously and in competition at the same active site. Although the small subunit is not catalytic it is essential for maximal activity. This chain is Ribulose bisphosphate carboxylase small subunit, chloroplastic 1, found in Triticum aestivum (Wheat).